A 706-amino-acid chain; its full sequence is Fatty acid oxidation complex subunit alpha (706 aa).

An enoyl-CoA hydratase region spans residues 1 to 188 (MEKTFSLSRR…KMGLVDDVVP (188 aa)). Residues 308 to 706 (RKVAKAVVLG…AMAAEGKTFY (399 aa)) are 3-hydroxyacyl-CoA dehydrogenase.

In the N-terminal section; belongs to the enoyl-CoA hydratase/isomerase family. It in the central section; belongs to the 3-hydroxyacyl-CoA dehydrogenase family. As to quaternary structure, heterotetramer of two alpha chains (FadJ) and two beta chains (FadI).

The protein resides in the cytoplasm. The enzyme catalyses a (3S)-3-hydroxyacyl-CoA = a (2E)-enoyl-CoA + H2O. It catalyses the reaction a 4-saturated-(3S)-3-hydroxyacyl-CoA = a (3E)-enoyl-CoA + H2O. The catalysed reaction is a (3S)-3-hydroxyacyl-CoA + NAD(+) = a 3-oxoacyl-CoA + NADH + H(+). It carries out the reaction (3S)-3-hydroxybutanoyl-CoA = (3R)-3-hydroxybutanoyl-CoA. It functions in the pathway lipid metabolism; fatty acid beta-oxidation. Functionally, catalyzes the formation of a hydroxyacyl-CoA by addition of water on enoyl-CoA. Also exhibits 3-hydroxyacyl-CoA epimerase and 3-hydroxyacyl-CoA dehydrogenase activities. The polypeptide is Fatty acid oxidation complex subunit alpha (Shewanella amazonensis (strain ATCC BAA-1098 / SB2B)).